Here is a 122-residue protein sequence, read N- to C-terminus: Fluoride-specific ion channel FluC (122 aa).

Helical transmembrane passes span 4 to 24 (LAVL…SIFI), 33 to 53 (LGTM…SIYL), 66 to 86 (LLIT…LEGI), and 95 to 115 (LKAF…VALG). Na(+) is bound by residues Gly-73 and Thr-76.

It belongs to the fluoride channel Fluc/FEX (TC 1.A.43) family.

The protein resides in the cell inner membrane. The enzyme catalyses fluoride(in) = fluoride(out). Its activity is regulated as follows. Na(+) is not transported, but it plays an essential structural role and its presence is essential for fluoride channel function. In terms of biological role, fluoride-specific ion channel. Important for reducing fluoride concentration in the cell, thus reducing its toxicity. This chain is Fluoride-specific ion channel FluC, found in Hydrogenobaculum sp. (strain Y04AAS1).